Here is a 316-residue protein sequence, read N- to C-terminus: GTPase Era (316 aa).

The 182-residue stretch at 9-190 (RAGFAAIIGA…TAKLVSMMPE (182 aa)) folds into the Era-type G domain. The tract at residues 17–24 (GAPNAGKS) is G1. Position 17–24 (17–24 (GAPNAGKS)) interacts with GTP. The tract at residues 43 to 47 (QTTRF) is G2. Residues 64 to 67 (DTPG) are G3. GTP-binding positions include 64–68 (DTPGI) and 140–143 (NKID). Residues 140-143 (NKID) are G4. A G5 region spans residues 169–171 (ISA). The KH type-2 domain maps to 221 to 298 (VHEELPYAAT…HLFLHVKVKE (78 aa)).

Belongs to the TRAFAC class TrmE-Era-EngA-EngB-Septin-like GTPase superfamily. Era GTPase family. Monomer.

Its subcellular location is the cytoplasm. The protein resides in the cell inner membrane. In terms of biological role, an essential GTPase that binds both GDP and GTP, with rapid nucleotide exchange. Plays a role in 16S rRNA processing and 30S ribosomal subunit biogenesis and possibly also in cell cycle regulation and energy metabolism. The sequence is that of GTPase Era from Caulobacter vibrioides (strain ATCC 19089 / CIP 103742 / CB 15) (Caulobacter crescentus).